Consider the following 4116-residue polypeptide: Dynein axonemal heavy chain 3 (4116 aa).

Disordered stretches follow at residues methionine 1–glutamate 68 and valine 137–serine 172. The segment at methionine 1–leucine 1390 is stem. The segment covering glycine 145–glutamate 156 has biased composition (polar residues). The stretch at aspartate 785–glutamate 852 forms a coiled coil. 4 AAA regions span residues tyrosine 1391–alanine 1612, lysine 1672–lysine 1903, lysine 2036–glycine 2284, and glutamate 2395–histidine 2646. ATP is bound by residues glycine 1429–threonine 1436, glycine 1710–threonine 1717, glycine 2074–serine 2081, and glycine 2434–glutamine 2441. The interval phenylalanine 2661–cysteine 2960 is stalk. 2 AAA regions span residues leucine 3045–glutamate 3275 and valine 3488–methionine 3712.

This sequence belongs to the dynein heavy chain family. In terms of assembly, consists of at least two heavy chains and a number of intermediate and light chains. As to expression, expressed primarily in trachea and testis, 2 tissues containing axonemal structures. Also expressed in lung.

The protein localises to the cytoplasm. It localises to the cytoskeleton. The protein resides in the cilium axoneme. Force generating protein of respiratory cilia. Produces force towards the minus ends of microtubules. Dynein has ATPase activity; the force-producing power stroke is thought to occur on release of ADP. Involved in sperm motility; implicated in sperm flagellar assembly. The protein is Dynein axonemal heavy chain 3 (DNAH3) of Homo sapiens (Human).